Consider the following 470-residue polypeptide: Box C/D snoRNA protein 1 (470 aa).

Residues 1–70 (MEFAAENEGK…EEGSGQRPEE (70 aa)) are disordered. The residue at position 25 (Ser25) is a Phosphoserine. Gly residues predominate over residues 41–51 (EFGGGEEGTGL). Residues Lys79, Lys108, Lys118, Lys138, Lys143, Lys153, Lys162, Lys173, Lys183, and Lys200 each participate in a glycyl lysine isopeptide (Lys-Gly) (interchain with G-Cter in SUMO2) cross-link. Cys220, Cys223, Cys232, Cys235, Cys240, Cys244, His248, and Cys254 together coordinate Zn(2+). Residues 220–254 (CETCGTEEAKYRCPRCMRYSCSLPCVKKHKAELTC) form an HIT-type zinc finger. Lys459 participates in a covalent cross-link: Glycyl lysine isopeptide (Lys-Gly) (interchain with G-Cter in SUMO2).

The protein belongs to the BCD1 family. Interacts with FBL, SNU13, NOP58, NUFIP1, RUVBL1, RUVBL2 and TAF9. Interacts (via HIT-type zinc finger) with the RUVBL1/RUVBL2 complex in the presence of ADP.

Its function is as follows. Required for box C/D snoRNAs accumulation involved in snoRNA processing, snoRNA transport to the nucleolus and ribosome biogenesis. The protein is Box C/D snoRNA protein 1 (ZNHIT6) of Homo sapiens (Human).